The sequence spans 96 residues: Co-chaperonin GroES (96 aa).

This sequence belongs to the GroES chaperonin family. As to quaternary structure, heptamer of 7 subunits arranged in a ring. Interacts with the chaperonin GroEL.

The protein resides in the cytoplasm. In terms of biological role, together with the chaperonin GroEL, plays an essential role in assisting protein folding. The GroEL-GroES system forms a nano-cage that allows encapsulation of the non-native substrate proteins and provides a physical environment optimized to promote and accelerate protein folding. GroES binds to the apical surface of the GroEL ring, thereby capping the opening of the GroEL channel. This is Co-chaperonin GroES from Halorhodospira halophila (strain DSM 244 / SL1) (Ectothiorhodospira halophila (strain DSM 244 / SL1)).